The primary structure comprises 21 residues: Protein YliM (21 aa).

This Escherichia coli (strain K12) protein is Protein YliM.